A 216-amino-acid chain; its full sequence is 3-isopropylmalate dehydratase small subunit (216 aa).

Belongs to the LeuD family. LeuD type 1 subfamily. Heterodimer of LeuC and LeuD.

The enzyme catalyses (2R,3S)-3-isopropylmalate = (2S)-2-isopropylmalate. It functions in the pathway amino-acid biosynthesis; L-leucine biosynthesis; L-leucine from 3-methyl-2-oxobutanoate: step 2/4. Functionally, catalyzes the isomerization between 2-isopropylmalate and 3-isopropylmalate, via the formation of 2-isopropylmaleate. This chain is 3-isopropylmalate dehydratase small subunit, found in Polaromonas naphthalenivorans (strain CJ2).